The sequence spans 277 residues: Ribosomal RNA small subunit methyltransferase A (277 aa).

Residues His-15, Leu-17, Gly-42, Glu-64, Asp-89, and Asn-109 each contribute to the S-adenosyl-L-methionine site.

The protein belongs to the class I-like SAM-binding methyltransferase superfamily. rRNA adenine N(6)-methyltransferase family. RsmA subfamily.

It localises to the cytoplasm. It carries out the reaction adenosine(1518)/adenosine(1519) in 16S rRNA + 4 S-adenosyl-L-methionine = N(6)-dimethyladenosine(1518)/N(6)-dimethyladenosine(1519) in 16S rRNA + 4 S-adenosyl-L-homocysteine + 4 H(+). Functionally, specifically dimethylates two adjacent adenosines (A1518 and A1519) in the loop of a conserved hairpin near the 3'-end of 16S rRNA in the 30S particle. May play a critical role in biogenesis of 30S subunits. In Synechococcus sp. (strain CC9311), this protein is Ribosomal RNA small subunit methyltransferase A.